We begin with the raw amino-acid sequence, 94 residues long: MRIGIFKHLKEMNNWRKTVYKKSPIEIVQALLAQGLTQSEIEANTGIKQPSISRILTGKNKDPRISTMVALEKLYLELATNSFSTSRLNKSKAK.

In terms of domain architecture, HTH cro/C1-type spans 27 to 88; that stretch reads IVQALLAQGL…ATNSFSTSRL (62 aa). The segment at residues 38–57 is a DNA-binding region (H-T-H motif); it reads QSEIEANTGIKQPSISRILT.

This is Putative protein P2 (2) from Escherichia coli (Bacteriophage APSE-1).